Here is a 146-residue protein sequence, read N- to C-terminus: Protein TraB (146 aa).

In Escherichia coli, this protein is Protein TraB (traB).